Reading from the N-terminus, the 275-residue chain is 2,3,4,5-tetrahydropyridine-2,6-dicarboxylate N-succinyltransferase (275 aa).

Arg106 and Asp143 together coordinate substrate.

The protein belongs to the transferase hexapeptide repeat family. In terms of assembly, homotrimer.

Its subcellular location is the cytoplasm. It catalyses the reaction (S)-2,3,4,5-tetrahydrodipicolinate + succinyl-CoA + H2O = (S)-2-succinylamino-6-oxoheptanedioate + CoA. Its pathway is amino-acid biosynthesis; L-lysine biosynthesis via DAP pathway; LL-2,6-diaminopimelate from (S)-tetrahydrodipicolinate (succinylase route): step 1/3. In Burkholderia ambifaria (strain ATCC BAA-244 / DSM 16087 / CCUG 44356 / LMG 19182 / AMMD) (Burkholderia cepacia (strain AMMD)), this protein is 2,3,4,5-tetrahydropyridine-2,6-dicarboxylate N-succinyltransferase.